A 447-amino-acid polypeptide reads, in one-letter code: Serine/threonine-protein phosphatase 2A 55 kDa regulatory subunit B gamma isoform (447 aa).

7 WD repeats span residues Thr-22 to Pro-61, Glu-87 to Glu-128, Gly-171 to Asn-209, Asp-220 to Lys-260, Glu-279 to Glu-317, Glu-334 to Leu-375, and Asp-410 to Met-446.

The protein belongs to the phosphatase 2A regulatory subunit B family. In terms of assembly, PP2A consists of a common heterodimeric core enzyme, composed of a 36 kDa catalytic subunit (subunit C) and a 65 kDa constant regulatory subunit (PR65 or subunit A), that associates with a variety of regulatory subunits. Proteins that associate with the core dimer include three families of regulatory subunits B (the R2/B/PR55/B55, R3/B''/PR72/PR130/PR59 and R5/B'/B56 families), the 48 kDa variable regulatory subunit, viral proteins, and cell signaling molecules. Interacts with IER5.

Functionally, the B regulatory subunit might modulate substrate selectivity and catalytic activity, and might also direct the localization of the catalytic enzyme to a particular subcellular compartment. In Homo sapiens (Human), this protein is Serine/threonine-protein phosphatase 2A 55 kDa regulatory subunit B gamma isoform (PPP2R2C).